The chain runs to 414 residues: Probable sugar-binding periplasmic protein (414 aa).

The signal sequence occupies residues 1–22; the sequence is MRKFMTTTAVAALMLAATAARA.

The protein belongs to the bacterial solute-binding protein 1 family.

It localises to the periplasm. Part of a binding-protein-dependent transport system for a sugar. In Rhizobium meliloti (strain 1021) (Ensifer meliloti), this protein is Probable sugar-binding periplasmic protein.